The sequence spans 594 residues: Cytoplasmic polyadenylation element-binding protein 1 (594 aa).

Positions 1–33 (MQHQVKACGDSKSTTRSLQGNRRSGAASLKKPS) are disordered. A compositionally biased stretch (polar residues) spans 11–22 (SKSTTRSLQGNR). 2 consecutive RRM domains span residues 257 to 364 (RKVF…PWRL) and 381 to 452 (RTVF…HAET). A disordered region spans residues 519–560 (TGDQTRILPRPPHHQSSHYSPRSHQMMNHDSMESSNQSRGNT). Positions 535 to 560 (SHYSPRSHQMMNHDSMESSNQSRGNT) are enriched in polar residues.

As to quaternary structure, interacts with fbf-1.

Cytoplasmic polyadenylation element binding protein that binds to and regulates the translation of specific mRNAs. Essential for progression through meiosis. Involved in spermatogenesis. The protein is Cytoplasmic polyadenylation element-binding protein 1 (cpb-1) of Caenorhabditis remanei (Caenorhabditis vulgaris).